Consider the following 153-residue polypeptide: UPF0127 protein TGAM_1372 (153 aa).

This sequence belongs to the UPF0127 family.

In Thermococcus gammatolerans (strain DSM 15229 / JCM 11827 / EJ3), this protein is UPF0127 protein TGAM_1372.